The sequence spans 206 residues: Outer-membrane lipoprotein carrier protein (206 aa).

An N-terminal signal peptide occupies residues 1-21 (MTRLLFVLVLSVCLLPVPVKA).

It belongs to the LolA family. In terms of assembly, monomer.

Its subcellular location is the periplasm. Participates in the translocation of lipoproteins from the inner membrane to the outer membrane. Only forms a complex with a lipoprotein if the residue after the N-terminal Cys is not an aspartate (The Asp acts as a targeting signal to indicate that the lipoprotein should stay in the inner membrane). The chain is Outer-membrane lipoprotein carrier protein from Nitrosomonas europaea (strain ATCC 19718 / CIP 103999 / KCTC 2705 / NBRC 14298).